Consider the following 1556-residue polypeptide: Disco-interacting protein 2 homolog C (1556 aa).

The DMAP1-binding domain maps to 7–120 (EGMALPLEVR…PMPSKRRSLV (114 aa)). 2 disordered regions span residues 47–157 (YLPQ…SQGS) and 170–189 (GSTT…SGAA). Residues 81 to 93 (GSRDERYRSDVHT) show a composition bias toward basic and acidic residues. 2 stretches are compositionally biased toward polar residues: residues 120–136 (VVQT…TSSG) and 144–157 (QGDS…SQGS). Positions 170–183 (GSTTSTTSSSSTQS) are enriched in low complexity. Threonine 264 is subject to Phosphothreonine.

This sequence belongs to the DIP2 family.

This is Disco-interacting protein 2 homolog C (DIP2C) from Homo sapiens (Human).